A 428-amino-acid chain; its full sequence is Sarcosine reductase complex component B subunit alpha (428 aa).

Residue Cys242 is modified to Pyruvic acid (Cys).

In terms of assembly, heterotetramer of two alpha and two beta subunits. Component of the sarcosine reductase complex, together with components A and C. PB is substrate specific. In terms of processing, the peptide chain is cleaved into beta and alpha chains, and the alpha chain N-terminal cysteine is deaminated and oxidized to form a reactive pyruvoyl group.

It carries out the reaction acetyl phosphate + methylamine + [thioredoxin]-disulfide + H2O = sarcosine + [thioredoxin]-dithiol + phosphate + H(+). Its function is as follows. In the first step of sarcosine reductase, the substrate is bound to component PB via a Schiff base intermediate. Then the PB-activated substrate is nucleophilically attacked by the selenol anion of component PA to transform it to a carboxymethylated selenoether and the respective amine. By action of component PC, acetyl phosphate is formed, leaving component PA in its oxidized state. Finally component PA becomes reduced by the thioredoxin system to start a new catalytic cycle of reductive deamination. In Peptoclostridium acidaminophilum (Eubacterium acidaminophilum), this protein is Sarcosine reductase complex component B subunit alpha (grdG).